Consider the following 542-residue polypeptide: MRVFRRFYQVQLPPISKFRLLPQYKLKCGLEIHTQLDTRNKLFSMSTNDPFHSANKPNSHTSFFDIALPGTQPILNHEAVLFATKLAIALNCQINLDSQFDRKHYFYGDQPLGYQITQHFSPFASRGHLPLHKDIDGIDEISKNIHITQLQIEQDTGKSLYRKSDHITLIDLNRSNVPLIEMVTEPDFQDLKQIRAFIKKYQNLVRHLKISTGDLETGAMRVDVNLSINDHARVELKNLPNTSSILNAIKHEYLRQVQIVEDGMADELLSQPETRGWTGSSTVKLRSKETTIDYRYMPDMELPRITLAADVVETLQKTMPPLPDKILNTLMSEPYKLSLKDAKILCLSSNGQDEIYNHEELQQFYLDTFHSYADRVKGNIEANKLSKLPTNWIIHELLGDLNKLELPLSEITKVLTPQIFADFLMLIHNNEISSASGKLLLFHVLKTLKETNCDTSTTIDFNSLIDEFDIRTINQIDHDELREICNEIIETLNNDKLINDIVTGKKKKSIKFLVGQGMKLSQGRIKAQDFERTFKEVLDVKW.

Residues 1-66 (MRVFRRFYQV…PNSHTSFFDI (66 aa)) constitute a mitochondrion transit peptide.

Belongs to the GatB/GatE family. GatB subfamily. Subunit of the heterotrimeric GatFAB amidotransferase (AdT) complex, composed of A, B and F subunits.

It localises to the mitochondrion. The enzyme catalyses L-glutamyl-tRNA(Gln) + L-glutamine + ATP + H2O = L-glutaminyl-tRNA(Gln) + L-glutamate + ADP + phosphate + H(+). In terms of biological role, allows the formation of correctly charged Gln-tRNA(Gln) through the transamidation of misacylated Glu-tRNA(Gln) in the mitochondria. The reaction takes place in the presence of glutamine and ATP through an activated gamma-phospho-Glu-tRNA(Gln). This is Glutamyl-tRNA(Gln) amidotransferase subunit B, mitochondrial from Zygosaccharomyces rouxii (strain ATCC 2623 / CBS 732 / NBRC 1130 / NCYC 568 / NRRL Y-229).